We begin with the raw amino-acid sequence, 311 residues long: Homeobox protein knotted-1-like 10 (311 aa).

Disordered stretches follow at residues Met1–Thr45 and Leu153–Asp184. The segment covering Ser12–Ala22 has biased composition (gly residues). One can recognise an ELK domain in the interval Glu197–Phe217. The segment at residues Leu218 to Ser281 is a DNA-binding region (homeobox; TALE-type).

This sequence belongs to the TALE/KNOX homeobox family.

The protein localises to the nucleus. Functionally, probable transcription factor that may be involved in shoot formation during embryogenesis. In Oryza sativa subsp. indica (Rice), this protein is Homeobox protein knotted-1-like 10 (OSH71).